The sequence spans 315 residues: 4-hydroxy-3-methylbut-2-enyl diphosphate reductase (315 aa).

Residue C12 coordinates [4Fe-4S] cluster. H43 and H81 together coordinate (2E)-4-hydroxy-3-methylbut-2-enyl diphosphate. Dimethylallyl diphosphate is bound by residues H43 and H81. H43 and H81 together coordinate isopentenyl diphosphate. C103 is a [4Fe-4S] cluster binding site. H131 contacts (2E)-4-hydroxy-3-methylbut-2-enyl diphosphate. H131 serves as a coordination point for dimethylallyl diphosphate. H131 contacts isopentenyl diphosphate. E133 functions as the Proton donor in the catalytic mechanism. T172 is a binding site for (2E)-4-hydroxy-3-methylbut-2-enyl diphosphate. C200 is a binding site for [4Fe-4S] cluster. Residues S228, N230, and S273 each coordinate (2E)-4-hydroxy-3-methylbut-2-enyl diphosphate. Dimethylallyl diphosphate is bound by residues S228, N230, and S273. Isopentenyl diphosphate-binding residues include S228, N230, and S273.

The protein belongs to the IspH family. Requires [4Fe-4S] cluster as cofactor.

The enzyme catalyses isopentenyl diphosphate + 2 oxidized [2Fe-2S]-[ferredoxin] + H2O = (2E)-4-hydroxy-3-methylbut-2-enyl diphosphate + 2 reduced [2Fe-2S]-[ferredoxin] + 2 H(+). The catalysed reaction is dimethylallyl diphosphate + 2 oxidized [2Fe-2S]-[ferredoxin] + H2O = (2E)-4-hydroxy-3-methylbut-2-enyl diphosphate + 2 reduced [2Fe-2S]-[ferredoxin] + 2 H(+). It participates in isoprenoid biosynthesis; dimethylallyl diphosphate biosynthesis; dimethylallyl diphosphate from (2E)-4-hydroxy-3-methylbutenyl diphosphate: step 1/1. The protein operates within isoprenoid biosynthesis; isopentenyl diphosphate biosynthesis via DXP pathway; isopentenyl diphosphate from 1-deoxy-D-xylulose 5-phosphate: step 6/6. In terms of biological role, catalyzes the conversion of 1-hydroxy-2-methyl-2-(E)-butenyl 4-diphosphate (HMBPP) into a mixture of isopentenyl diphosphate (IPP) and dimethylallyl diphosphate (DMAPP). Acts in the terminal step of the DOXP/MEP pathway for isoprenoid precursor biosynthesis. This is 4-hydroxy-3-methylbut-2-enyl diphosphate reductase from Exiguobacterium sibiricum (strain DSM 17290 / CCUG 55495 / CIP 109462 / JCM 13490 / 255-15).